The primary structure comprises 567 residues: Urease subunit alpha (567 aa).

The Urease domain occupies 129-567; that stretch reads GGVDTHIHFI…LPMAQRYFLF (439 aa). Ni(2+) contacts are provided by H134, H136, and K217. Position 217 is an N6-carboxylysine (K217). H219 contacts substrate. Ni(2+) contacts are provided by H246 and H272. H320 acts as the Proton donor in catalysis. D360 serves as a coordination point for Ni(2+).

It belongs to the metallo-dependent hydrolases superfamily. Urease alpha subunit family. In terms of assembly, heterotrimer of UreA (gamma), UreB (beta) and UreC (alpha) subunits. Three heterotrimers associate to form the active enzyme. Ni cation serves as cofactor. In terms of processing, carboxylation allows a single lysine to coordinate two nickel ions.

Its subcellular location is the cytoplasm. It catalyses the reaction urea + 2 H2O + H(+) = hydrogencarbonate + 2 NH4(+). Its pathway is nitrogen metabolism; urea degradation; CO(2) and NH(3) from urea (urease route): step 1/1. This Proteus hauseri protein is Urease subunit alpha.